The chain runs to 97 residues: Co-chaperonin GroES (97 aa).

It belongs to the GroES chaperonin family. As to quaternary structure, heptamer of 7 subunits arranged in a ring. Interacts with the chaperonin GroEL.

Its subcellular location is the cytoplasm. Together with the chaperonin GroEL, plays an essential role in assisting protein folding. The GroEL-GroES system forms a nano-cage that allows encapsulation of the non-native substrate proteins and provides a physical environment optimized to promote and accelerate protein folding. GroES binds to the apical surface of the GroEL ring, thereby capping the opening of the GroEL channel. The polypeptide is Co-chaperonin GroES (Pseudarthrobacter chlorophenolicus (strain ATCC 700700 / DSM 12829 / CIP 107037 / JCM 12360 / KCTC 9906 / NCIMB 13794 / A6) (Arthrobacter chlorophenolicus)).